The primary structure comprises 366 residues: Mitogen-activated protein kinase p38a (366 aa).

In terms of domain architecture, Protein kinase spans 25 to 312; that stretch reads YQDLQPVGSG…AEEALSHPYL (288 aa). ATP-binding positions include 31-39 and Lys-54; that span reads VGSGAYGQV. The active-site Proton acceptor is the Asp-154. At Thr-184 the chain carries Phosphothreonine. The short motif at 184 to 186 is the TXY element; it reads TGY. Residue Tyr-186 is modified to Phosphotyrosine.

This sequence belongs to the protein kinase superfamily. CMGC Ser/Thr protein kinase family. MAP kinase subfamily. Mg(2+) serves as cofactor. In terms of processing, dually phosphorylated on Thr-184 and Tyr-186, which activates the enzyme.

Its subcellular location is the nucleus. It carries out the reaction L-seryl-[protein] + ATP = O-phospho-L-seryl-[protein] + ADP + H(+). The catalysed reaction is L-threonyl-[protein] + ATP = O-phospho-L-threonyl-[protein] + ADP + H(+). With respect to regulation, activated by threonine and tyrosine phosphorylation by Mkk3 in response to environmental stress. Functionally, kinase involved in a signal transduction pathway. May down-regulate insect immunity gene expression after prolonged infection. The protein is Mitogen-activated protein kinase p38a of Drosophila melanogaster (Fruit fly).